Reading from the N-terminus, the 1233-residue chain is Structural maintenance of chromosomes protein 1A (1233 aa).

32 to 39 (GPNGSGKS) is a binding site for ATP. Coiled-coil stretches lie at residues 104–124 (EYKI…LEKL) and 163–503 (ELAQ…KAEI). Residues 284–293 (IKEKDSELNQ) are compositionally biased toward basic and acidic residues. Disordered stretches follow at residues 284–308 (IKEK…TSHK) and 348–369 (QEFE…TLEE). S358 and S360 each carry phosphoserine. Positions 515-629 (VYGRLIDLCQ…DNVEDARRIA (115 aa)) constitute an SMC hinge domain. 2 positions are modified to N6-acetyllysine: K648 and K713. Residues 660 to 935 (KAKARRWDEK…RHNLLQACKM (276 aa)) are a coiled coil. Positions 947–966 (MDDISQEEGSSQGEDSVSGS) are disordered. The span at 953-966 (EEGSSQGEDSVSGS) shows a compositional bias: low complexity. S957 carries the post-translational modification Phosphoserine; by ATM. Position 962 is a phosphoserine (S962). A Phosphoserine; by ATM and ATR modification is found at S966. S970 carries the phosphoserine modification. Residues 991–1068 (KDAQAEEEIK…FEQIKKERFD (78 aa)) are a coiled coil. Position 1037 is an N6-acetyllysine (K1037).

Belongs to the SMC family. SMC1 subfamily. Forms a heterodimer with SMC3 in cohesin complexes. Cohesin complexes are composed of the SMC1 (SMC1A or SMC1B) and SMC3 heterodimer attached via their SMC hinge domain, RAD21 which link them, and one STAG protein (STAG1, STAG2 or STAG3), which interacts with RAD21. In germ cell cohesin complexes, SMC1A is mutually exclusive with SMC1B. Interacts with BRCA1. Found in a complex with CDCA5, SMC3 and RAD21, PDS5A/SCC-112 and PDS5B/APRIN. Interacts with NDC80. Interacts with BRAT1. Found in a complex containing POLE and SMC3. Interacts with RPGR, STAG3 and SYCP2. The cohesin complex interacts with the cohesin loading complex subunits NIPBL/Scc2 (via HEAT repeats) and MAU2/Scc4. NIPBL directly contacts all members of the complex, RAD21, SMC1A/B, SMC3 and STAG1. Post-translationally, ubiquitinated by the DCX(DCAF15) complex, leading to its degradation. In terms of processing, phosphorylated by ATM upon ionizing radiation in a NBS1-dependent manner. Phosphorylated by ATR upon DNA methylation in a MSH2/MSH6-dependent manner. Phosphorylation of Ser-957 and Ser-966 activates it and is required for S-phase checkpoint activation.

It is found in the nucleus. It localises to the chromosome. Its subcellular location is the centromere. The protein localises to the kinetochore. Involved in chromosome cohesion during cell cycle and in DNA repair. Central component of cohesin complex. The cohesin complex is required for the cohesion of sister chromatids after DNA replication. The cohesin complex apparently forms a large proteinaceous ring within which sister chromatids can be trapped. At anaphase, the complex is cleaved and dissociates from chromatin, allowing sister chromatids to segregate. The cohesin complex may also play a role in spindle pole assembly during mitosis. Involved in DNA repair via its interaction with BRCA1 and its related phosphorylation by ATM, or via its phosphorylation by ATR. Works as a downstream effector both in the ATM/NBS1 branch and in the ATR/MSH2 branch of S-phase checkpoint. In Homo sapiens (Human), this protein is Structural maintenance of chromosomes protein 1A (SMC1A).